Consider the following 40-residue polypeptide: Protein YneP (40 aa).

This is Protein YneP from Escherichia coli (strain K12).